Reading from the N-terminus, the 46-residue chain is Spectrin alpha chain, non-erythrocytic 1 (46 aa).

Spectrin repeat units lie at residues 1-5 (AQLAD), 7-14 (FHLQQFFR), 15-20 (SQLLGS), 21-26 (AHEVQR), 27-35 (LAQFVEHWK), and 39-46 (DLFLTFAK).

It belongs to the spectrin family. As to quaternary structure, associates with the gamma-tubulin complex in brain, but not in kidney, liver, sperm, or uterus. Like erythrocyte spectrin, the spectrin-like proteins are capable of forming dimers which can further associate to tetramers. Interacts with isoform 1 of ACP1. Interacts with CALM and EMD. Interacts (via C-terminal spectrin repeats) with TRPC4. Identified in a complex with ACTN4, CASK, IQGAP1, MAGI2, NPHS1 and SPTBN1. Interacts with CLN3; this interaction regulates the fodrin localization at the plasma membrane.

Its subcellular location is the cytoplasm. It localises to the cytoskeleton. The protein localises to the cell cortex. Its function is as follows. Fodrin, which seems to be involved in secretion, interacts with calmodulin in a calcium-dependent manner and is thus candidate for the calcium-dependent movement of the cytoskeleton at the membrane. The protein is Spectrin alpha chain, non-erythrocytic 1 (SPTAN1) of Capra hircus (Goat).